Consider the following 176-residue polypeptide: ATP-dependent protease subunit HslV (176 aa).

Threonine 2 is a catalytic residue. Positions 157, 160, and 163 each coordinate Na(+).

The protein belongs to the peptidase T1B family. HslV subfamily. As to quaternary structure, a double ring-shaped homohexamer of HslV is capped on each side by a ring-shaped HslU homohexamer. The assembly of the HslU/HslV complex is dependent on binding of ATP.

It is found in the cytoplasm. It catalyses the reaction ATP-dependent cleavage of peptide bonds with broad specificity.. With respect to regulation, allosterically activated by HslU binding. Protease subunit of a proteasome-like degradation complex believed to be a general protein degrading machinery. This is ATP-dependent protease subunit HslV from Buchnera aphidicola subsp. Baizongia pistaciae (strain Bp).